Consider the following 89-residue polypeptide: Small ribosomal subunit protein uS15 (89 aa).

It belongs to the universal ribosomal protein uS15 family. Part of the 30S ribosomal subunit. Forms a bridge to the 50S subunit in the 70S ribosome, contacting the 23S rRNA.

Functionally, one of the primary rRNA binding proteins, it binds directly to 16S rRNA where it helps nucleate assembly of the platform of the 30S subunit by binding and bridging several RNA helices of the 16S rRNA. Forms an intersubunit bridge (bridge B4) with the 23S rRNA of the 50S subunit in the ribosome. The sequence is that of Small ribosomal subunit protein uS15 from Geobacillus sp. (strain WCH70).